The following is a 410-amino-acid chain: Peptidase T (410 aa).

Position 78 (histidine 78) interacts with Zn(2+). Aspartate 80 is a catalytic residue. A Zn(2+)-binding site is contributed by aspartate 140. The active-site Proton acceptor is glutamate 173. Residues glutamate 174, aspartate 196, and histidine 379 each contribute to the Zn(2+) site.

The protein belongs to the peptidase M20B family. Zn(2+) is required as a cofactor.

The protein localises to the cytoplasm. The catalysed reaction is Release of the N-terminal residue from a tripeptide.. Its function is as follows. Cleaves the N-terminal amino acid of tripeptides. This is Peptidase T from Pectobacterium atrosepticum (strain SCRI 1043 / ATCC BAA-672) (Erwinia carotovora subsp. atroseptica).